A 781-amino-acid polypeptide reads, in one-letter code: Lon protease (781 aa).

A Lon N-terminal domain is found at 16-214 (ANVLVTRGIV…KILSFTIDER (199 aa)). 365 to 372 (GPPGVGKT) is an ATP binding site. A Lon proteolytic domain is found at 601-781 (EYMPGVVNGM…YDDVYNRLFK (181 aa)). Active-site residues include Ser-688 and Lys-731.

It belongs to the peptidase S16 family. As to quaternary structure, homohexamer. Organized in a ring with a central cavity.

It is found in the cytoplasm. It catalyses the reaction Hydrolysis of proteins in presence of ATP.. Functionally, ATP-dependent serine protease that mediates the selective degradation of mutant and abnormal proteins as well as certain short-lived regulatory proteins. Required for cellular homeostasis and for survival from DNA damage and developmental changes induced by stress. Degrades polypeptides processively to yield small peptide fragments that are 5 to 10 amino acids long. Binds to DNA in a double-stranded, site-specific manner. This is Lon protease from Malacoplasma penetrans (strain HF-2) (Mycoplasma penetrans).